The sequence spans 578 residues: Lipoprotein A (578 aa).

An N-terminal signal peptide occupies residues 1 to 27; it reads MNKKYFKKYSWVLILSTSILAPMTLAS. Cys-28 is lipidated: N-palmitoyl cysteine. Cys-28 is lipidated: S-diacylglycerol cysteine. 2 disordered regions span residues 35–135 and 172–203; these read KEDK…NTSA and AKDDSKEKSKNSSNLNLKTPVENRQNKNEVKD. Residues 41-50 are compositionally biased toward polar residues; it reads NDSSNLSNKT. Positions 51–74 are enriched in basic and acidic residues; the sequence is NKSDPNDHLKDKDKNVSQDNKDST. Over residues 75 to 96 the composition is skewed to polar residues; it reads NKAVSNENSQTQSQKTNESSQN. The span at 108 to 119 shows a compositional bias: low complexity; it reads ITNQNSSSNTKS. Over residues 172 to 181 the composition is skewed to basic and acidic residues; sequence AKDDSKEKSK.

This sequence belongs to the M.pulmonis LipAB lipoprotein family.

The protein resides in the cell membrane. The protein is Lipoprotein A (lipA) of Mycoplasmopsis pulmonis (strain UAB CTIP) (Mycoplasma pulmonis).